We begin with the raw amino-acid sequence, 73 residues long: uncharacterized protein (73 aa).

Helical transmembrane passes span L7–L27 and Y47–L67.

Its subcellular location is the cell membrane. This is an uncharacterized protein from Methanocaldococcus jannaschii (strain ATCC 43067 / DSM 2661 / JAL-1 / JCM 10045 / NBRC 100440) (Methanococcus jannaschii).